Here is a 369-residue protein sequence, read N- to C-terminus: 3-dehydroquinate synthase (369 aa).

Residues 110–114 (GVIGD), 134–135 (TT), Lys-147, Lys-156, and 174–177 (TLKT) contribute to the NAD(+) site. 3 residues coordinate Zn(2+): Glu-189, His-254, and His-271.

It belongs to the sugar phosphate cyclases superfamily. Dehydroquinate synthase family. It depends on Co(2+) as a cofactor. The cofactor is Zn(2+). NAD(+) is required as a cofactor.

It is found in the cytoplasm. The catalysed reaction is 7-phospho-2-dehydro-3-deoxy-D-arabino-heptonate = 3-dehydroquinate + phosphate. It participates in metabolic intermediate biosynthesis; chorismate biosynthesis; chorismate from D-erythrose 4-phosphate and phosphoenolpyruvate: step 2/7. Functionally, catalyzes the conversion of 3-deoxy-D-arabino-heptulosonate 7-phosphate (DAHP) to dehydroquinate (DHQ). This is 3-dehydroquinate synthase from Cyanothece sp. (strain PCC 7425 / ATCC 29141).